We begin with the raw amino-acid sequence, 89 residues long: Small ribosomal subunit protein bS16c (89 aa).

The protein belongs to the bacterial ribosomal protein bS16 family.

Its subcellular location is the plastid. It localises to the chloroplast. In Morus indica (Mulberry), this protein is Small ribosomal subunit protein bS16c.